The chain runs to 469 residues: Regulator of G-protein signaling 7 (469 aa).

Residues 37-112 (EKNGIPIRTV…DDGTFYRFQT (76 aa)) enclose the DEP domain. Phosphoserine is present on residues serine 229 and serine 241. Residues 235–256 (NDIRSHSPTHTPTPETKPPTED) are disordered. At threonine 243 the chain carries Phosphothreonine. The 62-residue stretch at 255-316 (EDELQQQIKY…LSDDTTFWEL (62 aa)) folds into the G protein gamma domain. Positions 333–448 (GMDEALKDPV…IRSSAYQELL (116 aa)) constitute an RGS domain. Serine 434 bears the Phosphoserine mark.

Interacts with GNB5, forming the RGS7-GNB5 complex. Interacts with GPR158; promotes the GTPase activator activity of the RGS7-GNB5 complex in absence of glycine, in contrast GTPase activator activity of the RGS7-GNB5 complex is inhibited in presence of glycine. Interacts with GPR179. Interacts with PKD1; this prevents rapid proteasomal degradation. Interacts with RGS7BP, leading to regulate the subcellular location of the heterodimer formed with GNB5. Interacts (phosphorylated form) with 14-3-3 protein YWHAQ. Interacts with SNAPIN. Interacts with GNAI1. Interacts with GNAO1, GNAI3 and GNAZ. Post-translationally, palmitoylated. In terms of processing, ubiquitinated, leading to rapid proteasomal degradation. Phosphorylation and subsequent interaction with 14-3-3 proteins inhibits GAP activity. As to expression, detected in retina (at protein level).

It localises to the cytoplasm. The protein resides in the cytosol. Its subcellular location is the cell membrane. The protein localises to the membrane. Functionally, GTPase activator component of the RGS7-GNB5 complex that regulates G protein-coupled receptor signaling cascades. The RGS7-GNB5 complex acts as an inhibitor signal transduction by promoting the GTPase activity of G protein alpha subunits, such as GNAO1, thereby driving them into their inactive GDP-bound form. May play a role in synaptic vesicle exocytosis. Glycine-dependent regulation of the RGS7-GNB5 complex by GPR158 affects mood and cognition via its ability to regulate neuronal excitability in L2/L3 pyramidal neurons of the prefrontal cortex. Modulates the activity of potassium channels that are activated by GNAO1 in response to muscarinic acetylcholine receptor M2/CHRM2 signaling. The sequence is that of Regulator of G-protein signaling 7 (RGS7) from Bos taurus (Bovine).